The sequence spans 72 residues: Translation initiation factor IF-1 (72 aa).

Residues 1–72 form the S1-like domain; the sequence is MSKEELLEFP…TKGRITYRFK (72 aa).

Belongs to the IF-1 family. Component of the 30S ribosomal translation pre-initiation complex which assembles on the 30S ribosome in the order IF-2 and IF-3, IF-1 and N-formylmethionyl-tRNA(fMet); mRNA recruitment can occur at any time during PIC assembly.

Its subcellular location is the cytoplasm. Its function is as follows. One of the essential components for the initiation of protein synthesis. Stabilizes the binding of IF-2 and IF-3 on the 30S subunit to which N-formylmethionyl-tRNA(fMet) subsequently binds. Helps modulate mRNA selection, yielding the 30S pre-initiation complex (PIC). Upon addition of the 50S ribosomal subunit IF-1, IF-2 and IF-3 are released leaving the mature 70S translation initiation complex. The polypeptide is Translation initiation factor IF-1 (Parvibaculum lavamentivorans (strain DS-1 / DSM 13023 / NCIMB 13966)).